Consider the following 584-residue polypeptide: Levansucrase (584 aa).

Positions 1-30 are cleaved as a signal peptide; sequence MAHVRRKVATLNMALAGSLLMVLGAQSALA. A Pyrrolidone carboxylic acid modification is found at glutamine 31. Tryptophan 134, aspartate 135, serine 225, arginine 308, and aspartate 309 together coordinate sucrose. Aspartate 135 functions as the Nucleophile in the catalytic mechanism. The cysteines at positions 339 and 395 are disulfide-linked. The active-site Proton donor/acceptor is the glutamate 401.

The protein belongs to the glycosyl hydrolase 68 family. In terms of assembly, monomer. The N-terminus is blocked. The N-terminal Gln is cyclized to a pyroglutamic acid.

It is found in the secreted. It carries out the reaction [6)-beta-D-fructofuranosyl-(2-&gt;](n) alpha-D-glucopyranoside + sucrose = [6)-beta-D-fructofuranosyl-(2-&gt;](n+1) alpha-D-glucopyranoside + D-glucose. Strongly inhibited by Hg(2+) and slightly activated by Co(2+). Not inhibited by the metal ion chelator EDTA, suggesting that this enzyme does not need a metal cofactor. Its function is as follows. Catalyzes the synthesis of levan, a fructose polymer, by transferring the fructosyl moiety from sucrose to a growing acceptor molecule. Also displays sucrose hydrolase activity. In vitro, catalyzes transfructosylation from sucrose to a variety of acceptors including water (sucrose hydrolysis), glucose (exchange reaction), fructan (polymerase reaction) and sucrose (oligofructoside synthesis). Levansucrase of G.diazotrophicus SRT4, unlike the enzyme of B.subtilis, causes accumulation of large quantities of tri- and tetrasaccharides but small quantities of high-molecular-mass levan. It may act more as a sucrose hydrolase than as a fructan polymerase, and may be the key enzyme in the sucrose metabolism of G.diazotrophicus SRT4. The polypeptide is Levansucrase (Gluconacetobacter diazotrophicus (Acetobacter diazotrophicus)).